We begin with the raw amino-acid sequence, 469 residues long: Glutamate--tRNA ligase 1 (469 aa).

A 'HIGH' region motif is present at residues 10–20; the sequence is PSPTGYLHVGG. Positions 252–256 match the 'KMSKS' region motif; it reads KLSKR. Lys255 contacts ATP.

It belongs to the class-I aminoacyl-tRNA synthetase family. Glutamate--tRNA ligase type 1 subfamily. As to quaternary structure, monomer.

It is found in the cytoplasm. It carries out the reaction tRNA(Glu) + L-glutamate + ATP = L-glutamyl-tRNA(Glu) + AMP + diphosphate. In terms of biological role, catalyzes the attachment of glutamate to tRNA(Glu) in a two-step reaction: glutamate is first activated by ATP to form Glu-AMP and then transferred to the acceptor end of tRNA(Glu). The chain is Glutamate--tRNA ligase 1 from Fervidobacterium nodosum (strain ATCC 35602 / DSM 5306 / Rt17-B1).